An 875-amino-acid polypeptide reads, in one-letter code: uncharacterized protein (875 aa).

This is an uncharacterized protein from Mycobacterium bovis (strain ATCC BAA-935 / AF2122/97).